The following is a 1067-amino-acid chain: Hemoglobin and hemoglobin-haptoglobin-binding protein B (1067 aa).

An N-terminal signal peptide occupies residues 1-24 (MTNFKFSLLACSIAFALNASTAYA). Repeat copies occupy residues 26–29 (QPTN), 30–33 (QPTN), 34–37 (QPTN), 38–41 (QPTN), 42–45 (QPTN), and 46–49 (QPTN). The interval 26–49 (QPTNQPTNQPTNQPTNQPTNQPTN) is 6 X 4 AA tandem repeats of Q-P-T-N. A compositionally biased stretch (low complexity) spans 26-51 (QPTNQPTNQPTNQPTNQPTNQPTNQN). Positions 26–53 (QPTNQPTNQPTNQPTNQPTNQPTNQNSN) are disordered. Positions 59-66 (EQINVSGS) match the TonB box motif. Positions 71-196 (NIKEKKVGET…LGGSVIFETK (126 aa)) constitute a TBDR plug domain. The TBDR beta-barrel domain occupies 204 to 1067 (DKDYYLSYKR…NYRMSVQFEF (864 aa)). The TonB C-terminal box signature appears at 1050-1067 (NRFYAPGRNYRMSVQFEF).

Belongs to the TonB-dependent receptor family. Hemoglobin/haptoglobin binding protein subfamily.

The protein resides in the cell outer membrane. Functionally, acts as a receptor for hemoglobin or the hemoglobin/haptoglobin complex of the human host and is required for heme uptake. In Haemophilus influenzae, this protein is Hemoglobin and hemoglobin-haptoglobin-binding protein B (hgbB).